The sequence spans 95 residues: MEMARAHVFIRGKVQGVFFRQSMKEVAMRNGVKGWVRNRSDGKTVEAVLEGPRDAVMKVLEWARIGPPGARVEDIEVQWEEYKGEFKDFKILPTV.

Positions 5–93 constitute an Acylphosphatase-like domain; sequence RAHVFIRGKV…GEFKDFKILP (89 aa). Active-site residues include R20 and N38.

Belongs to the acylphosphatase family.

It carries out the reaction an acyl phosphate + H2O = a carboxylate + phosphate + H(+). The polypeptide is Acylphosphatase (acyP) (Pyrobaculum aerophilum (strain ATCC 51768 / DSM 7523 / JCM 9630 / CIP 104966 / NBRC 100827 / IM2)).